The following is a 662-amino-acid chain: UvrABC system protein B (662 aa).

The 158-residue stretch at 31-188 folds into the Helicase ATP-binding domain; the sequence is DNIEGGEKAQ…NDLVDIQFER (158 aa). 44–51 contacts ATP; the sequence is GATGTGKT. Positions 97–120 match the Beta-hairpin motif; sequence YYDYYQPEAYVPSSDTYIEKDSSV. A Helicase C-terminal domain is found at 435 to 601; it reads QIDDLLGEIN…TIKKEIRDLI (167 aa). Positions 626–661 constitute a UVR domain; that stretch reads KELVKKLEKQMQEAVEVLDFELAAQIRDMMLEVKAL.

It belongs to the UvrB family. Forms a heterotetramer with UvrA during the search for lesions. Interacts with UvrC in an incision complex.

The protein localises to the cytoplasm. Its function is as follows. The UvrABC repair system catalyzes the recognition and processing of DNA lesions. A damage recognition complex composed of 2 UvrA and 2 UvrB subunits scans DNA for abnormalities. Upon binding of the UvrA(2)B(2) complex to a putative damaged site, the DNA wraps around one UvrB monomer. DNA wrap is dependent on ATP binding by UvrB and probably causes local melting of the DNA helix, facilitating insertion of UvrB beta-hairpin between the DNA strands. Then UvrB probes one DNA strand for the presence of a lesion. If a lesion is found the UvrA subunits dissociate and the UvrB-DNA preincision complex is formed. This complex is subsequently bound by UvrC and the second UvrB is released. If no lesion is found, the DNA wraps around the other UvrB subunit that will check the other stand for damage. The protein is UvrABC system protein B of Streptococcus pneumoniae (strain Taiwan19F-14).